We begin with the raw amino-acid sequence, 1969 residues long: Protein mono-ADP-ribosyltransferase PARP4 (1969 aa).

The BRCT domain occupies 1–94; the sequence is MTLGIFANCI…RLLDVRNYDP (94 aa). The Nuclear localization signal motif lies at 19-25; it reads PRQQKKK. The segment at 92-132 is disordered; the sequence is YDPLSPAPAAPPAERSRSEVQSEYLPSDNTPEKENTEVTEV. Positions 235–363 constitute a PARP alpha-helical domain; sequence SEKLQALLLE…ETNLSKPNPP (129 aa). The 205-residue stretch at 362–566 folds into the PARP catalytic domain; it reads PPSLAKYRAL…FCTPGDQIKE (205 aa). A VIT domain is found at 600–728; sequence TNIKAGLQDA…KVLIKITYIT (129 aa). Residues 869-1039 form the VWFA domain; that stretch reads EVIICLDCSS…KQIEAQMTRI (171 aa). S1229 carries the post-translational modification Phosphoserine. The short motif at 1230 to 1242 is the Nuclear localization signal element; it reads DGHGVLQPVSVSS. Pro residues-rich tracts occupy residues 1372–1387, 1402–1417, 1425–1444, 1485–1513, and 1521–1540; these read PPHP…PLPL, HPPP…PPPS, LPPP…PPIP, and LPPP…PPPS. Positions 1372-1608 are disordered; sequence PPHPLGGTHP…AGTQFSLSPI (237 aa). An FH1 domain is found at 1443–1541; it reads IPGGTLIPPS…HIPPPPPIPG (99 aa). The span at 1541–1556 shows a compositional bias: low complexity; it reads GGTLIPSPSSLFGGTH. The segment covering 1557-1585 has biased composition (pro residues); sequence LPPPPLLPAGTHIPPPPPITGSTHPPPPS. The segment at 1808-1969 is interaction with the major vault protein; it reads FCDEDQESPV…LHRILYYSQG (162 aa).

The protein belongs to the ARTD/PARP family. In terms of assembly, component of the vault ribonucleoprotein particle, at least composed of MVP, PARP4 and one or more vault RNAs (vRNAs). Interacts with TEP1.

The protein resides in the cytoplasm. It localises to the nucleus. It catalyses the reaction L-aspartyl-[protein] + NAD(+) = 4-O-(ADP-D-ribosyl)-L-aspartyl-[protein] + nicotinamide. The enzyme catalyses L-glutamyl-[protein] + NAD(+) = 5-O-(ADP-D-ribosyl)-L-glutamyl-[protein] + nicotinamide. Functionally, mono-ADP-ribosyltransferase that mediates mono-ADP-ribosylation of target proteins. This Mus musculus (Mouse) protein is Protein mono-ADP-ribosyltransferase PARP4.